The primary structure comprises 446 residues: MAAPPATASAPSLRPSAASPRAAAARSVAVPSGPRTVGPRRDGGRFLGVRAAKAVSGVQSGTVVDDGVQRPWKLSDARLVLEDGSVWKAKSFGASGTQVGEVVFNTSLTGYQEILTDPSYAGQFVLMTNPHIGNTGVNPDDEESNRCFLAGLIIRNLSICTSNWRCTETLEEYLMKRNIMGIYDVDTRAITRRLREDGSLIGVLSTDQSRTDDELLEMAKNWKIVGVDLISGVTCDAPYEWSDKTDSEWEFKKGQSTESFHVVAYDFGIKHNILRRLTSYGCKITVVPANWPASEVLNLKPDGVFFSNGPGDPAAVPYAVKTVQEIIGKVPVFGICMGHQLIGQALGGKTFKMKFGHHGGNHPVCDLRSGRVDISAQNHNYAVDPESLPEGVKVTHINLNDNSCAGLQYPKMKLLSLQYHPESSPGPHDSDLAFGEFIEMMKNNRL.

The span at 1 to 32 shows a compositional bias: low complexity; the sequence is MAAPPATASAPSLRPSAASPRAAAARSVAVPS. Residues 1-44 are disordered; that stretch reads MAAPPATASAPSLRPSAASPRAAAARSVAVPSGPRTVGPRRDGG. The transit peptide at 1–50 directs the protein to the chloroplast; it reads MAAPPATASAPSLRPSAASPRAAAARSVAVPSGPRTVGPRRDGGRFLGVR. In terms of domain architecture, Glutamine amidotransferase type-1 spans 261–446; sequence HVVAYDFGIK…FIEMMKNNRL (186 aa). Cys-336 (nucleophile) is an active-site residue. Active-site residues include His-420 and Glu-422.

This sequence belongs to the CarA family. In terms of assembly, heterodimer composed of 2 chains; the small (or glutamine) chain promotes the hydrolysis of glutamine to ammonia, which is used by the large (or ammonia) chain to synthesize carbamoyl phosphate.

The protein localises to the plastid. It is found in the chloroplast. It carries out the reaction hydrogencarbonate + L-glutamine + 2 ATP + H2O = carbamoyl phosphate + L-glutamate + 2 ADP + phosphate + 2 H(+). The enzyme catalyses L-glutamine + H2O = L-glutamate + NH4(+). It participates in amino-acid biosynthesis; L-arginine biosynthesis; carbamoyl phosphate from bicarbonate: step 1/1. Its pathway is pyrimidine metabolism; UMP biosynthesis via de novo pathway; (S)-dihydroorotate from bicarbonate: step 1/3. Small subunit of the arginine-specific carbamoyl phosphate synthase (CPSase). CPSase catalyzes the formation of carbamoyl phosphate from the ammonia moiety of glutamine, carbonate, and phosphate donated by ATP, the first step of the arginine biosynthetic pathway. The small subunit (glutamine amidotransferase) binds and cleaves glutamine to supply the large subunit with the substrate ammonia. The polypeptide is Carbamoyl phosphate synthase small chain, chloroplastic (CARA) (Oryza sativa subsp. japonica (Rice)).